The following is a 217-amino-acid chain: Glycosylphosphatidylinositol anchor biosynthesis protein 11 (217 aa).

The next 6 helical transmembrane spans lie at 45-61 (TWQT…YWFI), 74-94 (WLLV…ATVY), 111-131 (VTCI…GAPF), 138-158 (TWLL…SVLN), 169-189 (YFIS…LDWD), and 195-215 (WPIP…TFCS).

It belongs to the PIGF family.

It is found in the endoplasmic reticulum membrane. It functions in the pathway glycolipid biosynthesis; glycosylphosphatidylinositol-anchor biosynthesis. Functionally, acts in the GPI biosynthetic pathway between GlcNAc-PI synthesis and GPI transfer to protein. The polypeptide is Glycosylphosphatidylinositol anchor biosynthesis protein 11 (GPI11) (Eremothecium gossypii (strain ATCC 10895 / CBS 109.51 / FGSC 9923 / NRRL Y-1056) (Yeast)).